The chain runs to 588 residues: MRSIYCGQVNEAHAGQTITLCGWVHRRRDLGGLIFIDMRDREGIVQVFFDPDKPDAFALASELRGEFCIQVSGVVRTRPDSQRNSDMATGAIEVFAHELTIINRAEPLPLDFNQVNSEEQRLKFRYLDLRRPEMAKYLKTRAKASAFVRRFMDEHGFLDIETPMLTKATPEGARDYLVPSRVHKGKFYALPQSPQLFKQLLMMSGFDRYYQIVKCFRDEDLRADRQPEFTQIDVETSFMTAPQVRELMEEMIRNLWQHVLAVDLGDFPVMTFDEAMRRFGSDKPDLRLPMELVDVADLLTAVEFAVFAGPANDPKGRVAALKVPGGAELSRKQIDEYTKFVGIYGAKGLAWMKVNEAANGIEGVQSPVAKFLSDEIVREILARTGAADGDIIFFGADSKKVVADAIGALRLKVGRDLGLMENSWKPLWVIDFPMFEEDSEGGLAAMHHPFTAPSNLGPSELKANPLSAYANAYDMVINGYEVGGGSVRIHNSEMQATVFDILGITPAEQRLKFGFLLDALKYGTPPHAGLAFGLDRLSMLLTGTDNIRDVIAFPKTTAAACLMTDAPSFANQAQMSELAIATTVKGDE.

Glu-171 serves as a coordination point for L-aspartate. Positions 195–198 (QLFK) are aspartate. Arg-217 is a binding site for L-aspartate. ATP contacts are provided by residues 217-219 (RDE) and Gln-226. His-447 is an L-aspartate binding site. Glu-481 serves as a coordination point for ATP. Arg-488 provides a ligand contact to L-aspartate. Position 533-536 (533-536 (GLDR)) interacts with ATP.

The protein belongs to the class-II aminoacyl-tRNA synthetase family. Type 1 subfamily. As to quaternary structure, homodimer.

The protein resides in the cytoplasm. The enzyme catalyses tRNA(Asp) + L-aspartate + ATP = L-aspartyl-tRNA(Asp) + AMP + diphosphate. Catalyzes the attachment of L-aspartate to tRNA(Asp) in a two-step reaction: L-aspartate is first activated by ATP to form Asp-AMP and then transferred to the acceptor end of tRNA(Asp). In Aeromonas salmonicida (strain A449), this protein is Aspartate--tRNA ligase.